Reading from the N-terminus, the 170-residue chain is Ureidoglycolate lyase (170 aa).

It belongs to the ureidoglycolate lyase family. In terms of assembly, homodimer. Ni(2+) is required as a cofactor.

It carries out the reaction (S)-ureidoglycolate = urea + glyoxylate. Its pathway is nitrogen metabolism; (S)-allantoin degradation. Its function is as follows. Catalyzes the catabolism of the allantoin degradation intermediate (S)-ureidoglycolate, generating urea and glyoxylate. Involved in the utilization of allantoin as nitrogen source. The protein is Ureidoglycolate lyase of Stutzerimonas stutzeri (strain A1501) (Pseudomonas stutzeri).